The following is a 457-amino-acid chain: Bifunctional protein GlmU (457 aa).

Residues 1-228 (MEGLVTLILA…SEEITGVNSR (228 aa)) are pyrophosphorylase. UDP-N-acetyl-alpha-D-glucosamine contacts are provided by residues 9–12 (LAAG), K23, Q73, and 78–79 (GT). Position 102 (D102) interacts with Mg(2+). Positions 139, 154, 169, and 226 each coordinate UDP-N-acetyl-alpha-D-glucosamine. Residue N226 coordinates Mg(2+). The interval 229-249 (VQLFEAEKIMRKRINYRHMEN) is linker. Residues 250–457 (GVTIVDPDTT…VQERIKKGRL (208 aa)) form an N-acetyltransferase region. Positions 331 and 349 each coordinate UDP-N-acetyl-alpha-D-glucosamine. The Proton acceptor role is filled by H361. UDP-N-acetyl-alpha-D-glucosamine-binding residues include Y364 and N375. Residues 384–385 (NY), A421, and R438 contribute to the acetyl-CoA site.

In the N-terminal section; belongs to the N-acetylglucosamine-1-phosphate uridyltransferase family. The protein in the C-terminal section; belongs to the transferase hexapeptide repeat family. Homotrimer. It depends on Mg(2+) as a cofactor.

Its subcellular location is the cytoplasm. It catalyses the reaction alpha-D-glucosamine 1-phosphate + acetyl-CoA = N-acetyl-alpha-D-glucosamine 1-phosphate + CoA + H(+). The catalysed reaction is N-acetyl-alpha-D-glucosamine 1-phosphate + UTP + H(+) = UDP-N-acetyl-alpha-D-glucosamine + diphosphate. Its pathway is nucleotide-sugar biosynthesis; UDP-N-acetyl-alpha-D-glucosamine biosynthesis; N-acetyl-alpha-D-glucosamine 1-phosphate from alpha-D-glucosamine 6-phosphate (route II): step 2/2. It participates in nucleotide-sugar biosynthesis; UDP-N-acetyl-alpha-D-glucosamine biosynthesis; UDP-N-acetyl-alpha-D-glucosamine from N-acetyl-alpha-D-glucosamine 1-phosphate: step 1/1. It functions in the pathway bacterial outer membrane biogenesis; LPS lipid A biosynthesis. Its function is as follows. Catalyzes the last two sequential reactions in the de novo biosynthetic pathway for UDP-N-acetylglucosamine (UDP-GlcNAc). The C-terminal domain catalyzes the transfer of acetyl group from acetyl coenzyme A to glucosamine-1-phosphate (GlcN-1-P) to produce N-acetylglucosamine-1-phosphate (GlcNAc-1-P), which is converted into UDP-GlcNAc by the transfer of uridine 5-monophosphate (from uridine 5-triphosphate), a reaction catalyzed by the N-terminal domain. The chain is Bifunctional protein GlmU from Thermoanaerobacter pseudethanolicus (strain ATCC 33223 / 39E) (Clostridium thermohydrosulfuricum).